A 191-amino-acid polypeptide reads, in one-letter code: Adenylate kinase (191 aa).

10–15 (GAGKGT) provides a ligand contact to ATP. The segment at 30–59 (STGDIFRANVTEGTPLGVEAKRYMDAGEYV) is NMP. Residues threonine 31, arginine 36, 57–59 (EYV), 85–88 (GYPR), and glutamine 92 contribute to the AMP site. Residues 126–136 (QRAQVEGRADD) are LID. Arginine 127 contacts ATP. The AMP site is built by arginine 133 and arginine 144. Glycine 172 lines the ATP pocket.

Belongs to the adenylate kinase family. In terms of assembly, monomer.

The protein resides in the cytoplasm. The catalysed reaction is AMP + ATP = 2 ADP. The protein operates within purine metabolism; AMP biosynthesis via salvage pathway; AMP from ADP: step 1/1. Functionally, catalyzes the reversible transfer of the terminal phosphate group between ATP and AMP. Plays an important role in cellular energy homeostasis and in adenine nucleotide metabolism. The polypeptide is Adenylate kinase (Nocardioides sp. (strain ATCC BAA-499 / JS614)).